The primary structure comprises 265 residues: Capsule polysaccharide export inner-membrane protein CtrC (265 aa).

The next 6 membrane-spanning stretches (helical) occupy residues 37-57 (IGFLWLFVEPLLMTFVIVLMW), 67-84 (TLNIVAFAITGYPMLMMW), 121-141 (IAGATIAQIVIMAVLIAIGWI), 148-168 (FYMLMAWLLMAFFAIGLGLVI), 178-198 (FGKIWGTLTFVMMPLSGAFFF), and 238-258 (WYIVLCNLVLLLFGLAMVSKF). The region spanning 37–258 (IGFLWLFVEP…LFGLAMVSKF (222 aa)) is the ABC transmembrane type-2 domain.

The protein belongs to the ABC-2 integral membrane protein family.

The protein localises to the cell inner membrane. May form an ATP-driven capsule polysaccharide export apparatus, in association with the CtrB and CtrD proteins. The polypeptide is Capsule polysaccharide export inner-membrane protein CtrC (ctrC) (Neisseria meningitidis serogroup B (strain ATCC BAA-335 / MC58)).